A 265-amino-acid chain; its full sequence is MMDSMIIGKYVPGTSLVHRLDPRTKLITIFLFVCIVFLANNVQTYALLGLFTIGVVSLTRVPFSFLMKGLKPIIWIVLFTFLLHILMTHEGPIIFQIGFFKVYEGGLVQGIFISLRFVYLILITTLLTLTTTPIEITDGMEQLLNPLKKLKLPVHELALMMSISLRFIPTLMEETDKIMKAQMARGVDFTSGPVKERVKAIVPLLVPLFVSAFKRAEELAVAMEARGYQGGEGRTKYRKLVWTGKDTSVIVSLIVLAALLFFLRA.

Transmembrane regions (helical) follow at residues 29 to 49 (IFLF…ALLG), 50 to 70 (LFTI…MKGL), 73 to 93 (IIWI…EGPI), 107 to 127 (LVQG…TTLL), 152 to 172 (LPVH…PTLM), and 243 to 263 (TGKD…LFFL).

The protein belongs to the energy-coupling factor EcfT family. As to quaternary structure, forms a stable energy-coupling factor (ECF) transporter complex composed of 2 membrane-embedded substrate-binding proteins (S component), 2 ATP-binding proteins (A component) and 2 transmembrane proteins (T component). May be able to interact with more than 1 S component at a time.

The protein localises to the cell membrane. In terms of biological role, transmembrane (T) component of an energy-coupling factor (ECF) ABC-transporter complex. Unlike classic ABC transporters this ECF transporter provides the energy necessary to transport a number of different substrates. Involved in riboflavin transport. The protein is Energy-coupling factor transporter transmembrane protein EcfT (ecfT) of Bacillus subtilis (strain 168).